The sequence spans 426 residues: Trophoblast glycoprotein (426 aa).

Residues 1-31 form the signal peptide; the sequence is MPGAGSRGPSAGDGRLRLARLALVLLGWVSA. Topologically, residues 32-361 are extracellular; sequence SAPSSSLPSS…ATLPQSLQTS (330 aa). Over residues 34–51 the composition is skewed to low complexity; that stretch reads PSSSLPSSSTSPAAFLAS. Residues 34 to 54 form a disordered region; sequence PSSSLPSSSTSPAAFLASGSA. The 39-residue stretch at 53–91 folds into the LRRNT domain; that stretch reads SAQPPPAERCPAACECSEAARTVKCVNRNLLEVPADLPP. Intrachain disulfides connect C62–C68 and C66–C77. 3 LRR repeats span residues 92 to 113, 116 to 139, and 141 to 163; these read YVRN…AFAR, PLAD…GAFE, and LPGL…FTFA. N124 is a glycosylation site (N-linked (GlcNAc...) asparagine). An N-linked (GlcNAc...) asparagine glycan is attached at N166. LRR repeat units lie at residues 172 to 210, 215 to 238, 239 to 261, and 262 to 281; these read PSPL…AALR, LRGL…LLDQ, LPSL…ASFR, and NLTH…VLHN. The N-linked (GlcNAc...) asparagine glycan is linked to N281. The LRRCT domain occupies 289-352; that stretch reads GLAHVRVFLD…LTSSDLDCDA (64 aa). Disulfide bonds link C304–C329 and C306–C350. A helical membrane pass occupies residues 362-382; that stretch reads YVFLGIVLALIGAIFLLVLYL. Over 383–426 the chain is Cytoplasmic; sequence NRKGIKKWMHNIRDACRDHMEGYHYRYEINADPRLTNLSSNSDV. At S424 the chain carries Phosphoserine.

In terms of processing, highly glycosylated.

The protein localises to the cell membrane. Its function is as follows. May function as an inhibitor of Wnt/beta-catenin signaling by indirectly interacting with LRP6 and blocking Wnt3a-dependent LRP6 internalization. The polypeptide is Trophoblast glycoprotein (Tpbg) (Rattus norvegicus (Rat)).